A 184-amino-acid chain; its full sequence is Oligoribonuclease (184 aa).

An Exonuclease domain is found at 8-169 (LIWIDLEMTG…EDIHESIIEL (162 aa)). The active site involves Tyr-129.

It belongs to the oligoribonuclease family.

It is found in the cytoplasm. Functionally, 3'-to-5' exoribonuclease specific for small oligoribonucleotides. The polypeptide is Oligoribonuclease (Buchnera aphidicola subsp. Schizaphis graminum (strain Sg)).